The sequence spans 252 residues: Phosphate import ATP-binding protein PstB (252 aa).

The region spanning 6–247 is the ABC transporter domain; the sequence is MSIRDLNFYY…PAQKATEDYI (242 aa). Position 38–45 (38–45) interacts with ATP; sequence GPSGCGKS.

Belongs to the ABC transporter superfamily. Phosphate importer (TC 3.A.1.7) family. The complex is composed of two ATP-binding proteins (PstB), two transmembrane proteins (PstC and PstA) and a solute-binding protein (PstS).

It localises to the cell inner membrane. It carries out the reaction phosphate(out) + ATP + H2O = ADP + 2 phosphate(in) + H(+). Part of the ABC transporter complex PstSACB involved in phosphate import. Responsible for energy coupling to the transport system. This is Phosphate import ATP-binding protein PstB from Psychrobacter cryohalolentis (strain ATCC BAA-1226 / DSM 17306 / VKM B-2378 / K5).